A 2378-amino-acid polypeptide reads, in one-letter code: Dimodular nonribosomal peptide synthase (2378 aa).

Carrier domains are found at residues Ala961–Gln1036 and Gly2036–Ser2111. Residues Ser996 and Ser2071 each carry the O-(pantetheine 4'-phosphoryl)serine modification.

It belongs to the ATP-dependent AMP-binding enzyme family. It depends on pantetheine 4'-phosphate as a cofactor.

It catalyses the reaction holo-[peptidyl-carrier protein] + L-threonine + ATP = L-threonyl-[peptidyl-carrier protein] + AMP + diphosphate. The enzyme catalyses holo-[peptidyl-carrier protein] + glycine + ATP = glycyl-[peptidyl-carrier protein] + AMP + diphosphate. Its pathway is siderophore biosynthesis; bacillibactin biosynthesis. Functionally, specifically adenylates L-threonine and, to a lesser extent, glycine and covalently loads both amino acids onto their corresponding peptidyl carrier domains. This Bacillus subtilis (strain 168) protein is Dimodular nonribosomal peptide synthase (dhbF).